A 338-amino-acid polypeptide reads, in one-letter code: Lipoate-protein ligase A (338 aa).

The region spanning Pro29–Val216 is the BPL/LPL catalytic domain. ATP-binding positions include Arg71, Gly76–Phe79, and Lys134. Lys134 contributes to the (R)-lipoate binding site.

The protein belongs to the LplA family. As to quaternary structure, monomer.

The protein localises to the cytoplasm. The enzyme catalyses L-lysyl-[lipoyl-carrier protein] + (R)-lipoate + ATP = N(6)-[(R)-lipoyl]-L-lysyl-[lipoyl-carrier protein] + AMP + diphosphate + H(+). Its pathway is protein modification; protein lipoylation via exogenous pathway; protein N(6)-(lipoyl)lysine from lipoate: step 1/2. It participates in protein modification; protein lipoylation via exogenous pathway; protein N(6)-(lipoyl)lysine from lipoate: step 2/2. In terms of biological role, catalyzes both the ATP-dependent activation of exogenously supplied lipoate to lipoyl-AMP and the transfer of the activated lipoyl onto the lipoyl domains of lipoate-dependent enzymes. This chain is Lipoate-protein ligase A, found in Shigella sonnei (strain Ss046).